The sequence spans 189 residues: MKERSSSPGTPDSGRRARPKPAKLKMTVQYATSTREPLPSRALLRKWVKAALAHDAEIALRIVDEEEGHRLNRDFRNKDYATNVLTFVYRDGQIHPDSPLGEKRGAYPLTGDIVLCAPVVENEAGQQQKDLMAHYAHLTVHGVLHLQGYDHQEDEDAKNMEETETRILAWLGYEDPYAGYQLAEAVDCG.

The span at 1 to 10 (MKERSSSPGT) shows a compositional bias: polar residues. Residues 1–23 (MKERSSSPGTPDSGRRARPKPAK) are disordered. Zn(2+)-binding residues include histidine 141, histidine 145, and histidine 151.

Belongs to the endoribonuclease YbeY family. It depends on Zn(2+) as a cofactor.

Its subcellular location is the cytoplasm. Functionally, single strand-specific metallo-endoribonuclease involved in late-stage 70S ribosome quality control and in maturation of the 3' terminus of the 16S rRNA. This chain is Endoribonuclease YbeY, found in Nitrosospira multiformis (strain ATCC 25196 / NCIMB 11849 / C 71).